Here is a 254-residue protein sequence, read N- to C-terminus: Type II methyl-directed restriction enzyme DpnI (254 aa).

Belongs to the DpnI type II restriction endonuclease family.

The enzyme catalyses Endonucleolytic cleavage of DNA to give specific double-stranded fragments with terminal 5'-phosphates.. Functionally, an M and P subtype restriction enzyme that recognizes the double-stranded, methylated sequence 5'-G(Me)ATC-3' and cleaves after A-2. This is Type II methyl-directed restriction enzyme DpnI from Streptococcus pneumoniae serotype 4 (strain ATCC BAA-334 / TIGR4).